Reading from the N-terminus, the 419-residue chain is Metacaspase-1A (419 aa).

Residues 1–89 (MHHQQSSYGG…PPDQPVSFGQ (89 aa)) are disordered. The segment covering 41-51 (NGYNSPQQNYG) has biased composition (polar residues). A compositionally biased stretch (low complexity) spans 59–71 (YQQQSAYQNSYNQ). Catalysis depends on residues H190 and C246.

Belongs to the peptidase C14B family.

Involved in cell death (apoptosis). This chain is Metacaspase-1A (casA), found in Aspergillus oryzae (strain ATCC 42149 / RIB 40) (Yellow koji mold).